A 350-amino-acid polypeptide reads, in one-letter code: Galactokinase (350 aa).

14 to 17 is a binding site for substrate; that stretch reads EHTD. Residues Ser46 and 96-102 each bind ATP; that span reads GAGLSSS. Residues Ser102 and Glu134 each contribute to the Mg(2+) site. The Proton acceptor role is filled by Asp146. Tyr196 is a binding site for substrate.

The protein belongs to the GHMP kinase family. GalK subfamily.

It is found in the cytoplasm. It carries out the reaction alpha-D-galactose + ATP = alpha-D-galactose 1-phosphate + ADP + H(+). It participates in carbohydrate metabolism; galactose metabolism. Catalyzes the transfer of the gamma-phosphate of ATP to D-galactose to form alpha-D-galactose-1-phosphate (Gal-1-P). This is Galactokinase from Thermotoga maritima (strain ATCC 43589 / DSM 3109 / JCM 10099 / NBRC 100826 / MSB8).